Reading from the N-terminus, the 182-residue chain is UPF0397 protein BCAH187_A2708 (182 aa).

A run of 5 helical transmembrane segments spans residues 9-29 (VVAIGIGAALYGILGLWGFSI), 40-60 (AILTVFGALFGPVAGLLIGLI), 71-91 (WGIWWGWVISSGIIGFAMGFI), 114-134 (ITGLIGIVIAIIFAGAFDIIV), and 142-162 (IVIQVLGATIADVIVFLVLGL).

The protein belongs to the UPF0397 family.

It is found in the cell membrane. The chain is UPF0397 protein BCAH187_A2708 from Bacillus cereus (strain AH187).